The following is a 351-amino-acid chain: Heat shock factor protein HSF30 (351 aa).

The DNA-binding element occupies Pro29–Asn123.

The protein belongs to the HSF family. Homotrimer. Exhibits temperature-dependent phosphorylation.

It localises to the nucleus. Its function is as follows. DNA-binding protein that specifically binds heat shock promoter elements (HSE) and activates transcription. The sequence is that of Heat shock factor protein HSF30 (HSF30) from Solanum peruvianum (Peruvian tomato).